We begin with the raw amino-acid sequence, 225 residues long: UPF0758 protein Ssed_0385 (225 aa).

The region spanning I102–I224 is the MPN domain. The Zn(2+) site is built by H173, H175, and D186. The short motif at H173 to D186 is the JAMM motif element.

This sequence belongs to the UPF0758 family.

In Shewanella sediminis (strain HAW-EB3), this protein is UPF0758 protein Ssed_0385.